A 1318-amino-acid chain; its full sequence is Ubiquitin carboxyl-terminal hydrolase 19 (1318 aa).

A disordered region spans residues 1-109; that stretch reads MSGGASATGP…GACEDPHDLL (109 aa). Residues 1-1291 lie on the Cytoplasmic side of the membrane; the sequence is MSGGASATGP…TTPDEGCLRY (1291 aa). Residues 28-44 show a composition bias toward basic and acidic residues; that stretch reads DRANQESKDGDPRKETG. A compositionally biased stretch (polar residues) spans 83–94; the sequence is PSSSGSASTPQE. Residues 95 to 107 show a composition bias toward basic and acidic residues; sequence EQTKEGACEDPHD. The region spanning 113 to 202 is the CS 1 domain; the sequence is TPELLLDWRQ…VPMLTWPSLL (90 aa). Positions 234 to 255 are disordered; that stretch reads KAVPPGNDPVSPAMVRSRNPGK. Ser-244 bears the Phosphoserine mark. The 103-residue stretch at 282-384 folds into the CS 2 domain; that stretch reads LAFVKNDSYE…RQSQRWGGLE (103 aa). The disordered stretch occupies residues 390 to 479; that stretch reads VGGAKVAVPT…PMPHSPVSGD (90 aa). Composition is skewed to basic and acidic residues over residues 420-436 and 447-457; these read EEARAVEKDKSKARSED and PMEHVTPKPET. The USP domain maps to 497–1214; the sequence is TGLVNLGNTC…YAYVLFYRRR (718 aa). The Nucleophile role is filled by Cys-506. 8 residues coordinate Zn(2+): Cys-791, Cys-794, Cys-808, Cys-811, Cys-817, Cys-821, His-829, and Cys-833. Residues 791 to 833 form an MYND-type zinc finger; that stretch reads CAACQRKQQSEDEKLKRCTRCYRVGYCNQLCQKTHWPDHKGLC. The active-site Proton acceptor is His-1165. Over residues 1218–1232 the composition is skewed to basic and acidic residues; it reads VERPPRAGHSEHHPD. The segment at 1218–1239 is disordered; that stretch reads VERPPRAGHSEHHPDLGPAAEA. The chain crosses the membrane as a helical span at residues 1292 to 1312; the sequence is FVLGTVAALVALVLNVFYPLV. Residues 1313–1318 are Lumenal-facing; the sequence is SQSRWR.

It belongs to the peptidase C19 family. As to quaternary structure, interacts with RNF123. Interacts with BIRC2/c-IAP1, BIRC3/c-IAP2 and XIAP/BIRC4. Interacts with HIF1A (via N-terminus). Interacts (via N-terminus) with HSP90AA1; this interaction activates the deubiquitinase activity of USP19.

Its subcellular location is the endoplasmic reticulum membrane. It catalyses the reaction Thiol-dependent hydrolysis of ester, thioester, amide, peptide and isopeptide bonds formed by the C-terminal Gly of ubiquitin (a 76-residue protein attached to proteins as an intracellular targeting signal).. Functionally, deubiquitinating enzyme that regulates the degradation of various proteins by removing ubiquitin moieties, thereby preventing their proteasomal degradation. Stabilizes RNF123, which promotes CDKN1B degradation and contributes to cell proliferation. Decreases the levels of ubiquitinated proteins during skeletal muscle formation and acts to repress myogenesis. Modulates transcription of major myofibrillar proteins. Also involved in turnover of endoplasmic-reticulum-associated degradation (ERAD) substrates. Mechanistically, deubiquitinates and thereby stabilizes several E3 ligases involved in the ERAD pathway including SYVN1 or MARCHF6. Regulates the stability of other E3 ligases including BIRC2/c-IAP1 and BIRC3/c-IAP2 by preventing their ubiquitination. Required for cells to mount an appropriate response to hypoxia by rescuing HIF1A from degradation in a non-catalytic manner and by mediating the deubiquitination of FUNDC1. Attenuates mitochondrial damage and ferroptosis by targeting and stabilizing NADPH oxidase 4/NOX4. Negatively regulates TNF-alpha- and IL-1beta-triggered NF-kappa-B activation by hydrolyzing 'Lys-27'- and 'Lys-63'-linked polyubiquitin chains from MAP3K7. Modulates also the protein level and aggregation of polyQ-expanded huntingtin/HTT through HSP90AA1. This chain is Ubiquitin carboxyl-terminal hydrolase 19 (USP19), found in Homo sapiens (Human).